The following is a 334-amino-acid chain: Cytochrome c biogenesis protein CcsA (334 aa).

Transmembrane regions (helical) follow at residues 12–32, 35–55, 67–87, 96–116, 141–161, 242–262, 277–297, and 303–323; these read NTAFLVLLLTMFAYWVAVVFP, WLVQGASGAMAIANLTITALL, ISNLYESLFFLAWGITAVHFI, FVGAVTSPIALGIVAFAALTL, VMMVSYATLMVGSLLAIAFLF, IIGLGFPLLTIGIIAGAVWAN, WALITWLVFAAYLHARITKGW, and AILAASGFTVVWICYLGVNLL.

This sequence belongs to the CcmF/CycK/Ccl1/NrfE/CcsA family. As to quaternary structure, may interact with ccs1.

It is found in the cellular thylakoid membrane. In terms of biological role, required during biogenesis of c-type cytochromes (cytochrome c6 and cytochrome f) at the step of heme attachment. This chain is Cytochrome c biogenesis protein CcsA, found in Synechocystis sp. (strain ATCC 27184 / PCC 6803 / Kazusa).